A 677-amino-acid polypeptide reads, in one-letter code: Methionine--tRNA ligase (677 aa).

Residues 15–25 carry the 'HIGH' region motif; it reads PYANGSIHLGH. Zn(2+) is bound by residues Cys146, Cys149, Cys159, and Cys162. Residues 333-337 carry the 'KMSKS' region motif; it reads KMSKS. Residue Lys336 coordinates ATP. The tRNA-binding domain maps to 575 to 677; that stretch reads DFAKVDLRVA…DGAKPGQQVK (103 aa).

Belongs to the class-I aminoacyl-tRNA synthetase family. MetG type 1 subfamily. In terms of assembly, homodimer. The cofactor is Zn(2+).

It localises to the cytoplasm. It catalyses the reaction tRNA(Met) + L-methionine + ATP = L-methionyl-tRNA(Met) + AMP + diphosphate. In terms of biological role, is required not only for elongation of protein synthesis but also for the initiation of all mRNA translation through initiator tRNA(fMet) aminoacylation. In Klebsiella pneumoniae subsp. pneumoniae (strain ATCC 700721 / MGH 78578), this protein is Methionine--tRNA ligase.